An 807-amino-acid chain; its full sequence is Leucine--tRNA ligase (807 aa).

The short motif at 38–49 (PYPSGSGLHVGH) is the 'HIGH' region element. A 'KMSKS' region motif is present at residues 579–583 (KMSKS). An ATP-binding site is contributed by Lys-582.

It belongs to the class-I aminoacyl-tRNA synthetase family.

The protein resides in the cytoplasm. It carries out the reaction tRNA(Leu) + L-leucine + ATP = L-leucyl-tRNA(Leu) + AMP + diphosphate. This is Leucine--tRNA ligase from Mycoplasmopsis pulmonis (strain UAB CTIP) (Mycoplasma pulmonis).